Consider the following 418-residue polypeptide: Galactooligosaccharides transport system permease protein GanP (418 aa).

9 helical membrane passes run Ile-25–Leu-45, Val-65–Tyr-85, Leu-129–Thr-149, Val-191–Ile-211, Ile-226–Phe-246, Leu-279–Leu-299, Tyr-323–Phe-343, Gly-357–Leu-379, and Leu-388–Phe-408. The region spanning Leu-187–Gln-407 is the ABC transmembrane type-1 domain.

It belongs to the binding-protein-dependent transport system permease family. As to quaternary structure, the complex is composed of two ATP-binding proteins (MsmX), two transmembrane proteins (GanP and GanQ) and a solute-binding protein (GanS).

It is found in the cell membrane. Functionally, involved in galactan degradation. Part of the ABC transporter complex GanPQS involved in the uptake of galactooligosaccharides. Responsible for the translocation of the substrate across the membrane. This is Galactooligosaccharides transport system permease protein GanP (ganP) from Bacillus subtilis (strain 168).